The chain runs to 343 residues: Methionine import ATP-binding protein MetN 1 (343 aa).

The ABC transporter domain maps to I2–I241. G38 to S45 contacts ATP.

It belongs to the ABC transporter superfamily. Methionine importer (TC 3.A.1.24) family. As to quaternary structure, the complex is composed of two ATP-binding proteins (MetN), two transmembrane proteins (MetI) and a solute-binding protein (MetQ).

Its subcellular location is the cell inner membrane. The catalysed reaction is L-methionine(out) + ATP + H2O = L-methionine(in) + ADP + phosphate + H(+). It catalyses the reaction D-methionine(out) + ATP + H2O = D-methionine(in) + ADP + phosphate + H(+). Its function is as follows. Part of the ABC transporter complex MetNIQ involved in methionine import. Responsible for energy coupling to the transport system. This Yersinia pestis bv. Antiqua (strain Antiqua) protein is Methionine import ATP-binding protein MetN 1.